A 937-amino-acid polypeptide reads, in one-letter code: FNIP repeat-containing protein DDB_G0271996 (937 aa).

Polar residues predominate over residues 1–12 (MQQPISIQQPVV). The tract at residues 1-60 (MQQPISIQQPVVNNINNSPNNQANINNNTTNNTNNNNNNNNTTNNIANNNNSNNINNNNE) is disordered. The segment covering 13–60 (NNINNSPNNQANINNNTTNNTNNNNNNNNTTNNIANNNNSNNINNNNE) has biased composition (low complexity). FNIP repeat units lie at residues 307–350 (FNQP…LGQR), 354–394 (PIPI…TLDN), 396–439 (FNQP…FHQN), and 598–640 (YNHQ…RVKS). A coiled-coil region spans residues 677 to 769 (VEQQAQYAQQ…EEEDTNNHQH (93 aa)). Residues 719–729 (KQQQQQQQDNE) show a composition bias toward low complexity. Disordered stretches follow at residues 719-767 (KQQQ…TNNH), 794-823 (SNNS…EEED), and 910-937 (QNQN…NVKK). Over residues 751–763 (LEEEQENEEEEED) the composition is skewed to acidic residues. Composition is skewed to low complexity over residues 794 to 814 (SNNS…NNNS) and 910 to 929 (QNQN…NNNN). The stretch at 902–937 (ICNNINQNQNQNNNNYNNNNNNNNNNNNNKKKNVKK) forms a coiled coil.

This is FNIP repeat-containing protein DDB_G0271996 from Dictyostelium discoideum (Social amoeba).